The primary structure comprises 361 residues: Phospho-N-acetylmuramoyl-pentapeptide-transferase (361 aa).

Helical transmembrane passes span 25–45, 71–91, 94–114, 133–153, 169–189, 200–220, 240–260, 264–284, 289–309, and 338–358; these read TGGA…WIID, TPTM…VLWA, LNPY…VGFY, WRLL…VRLG, VAIN…VGAG, GLAI…SYLA, LSVL…FNAP, IFMG…IAVA, IVLA…IVQV, and QIVI…LSTL.

The protein belongs to the glycosyltransferase 4 family. MraY subfamily. The cofactor is Mg(2+).

The protein resides in the cell inner membrane. The catalysed reaction is UDP-N-acetyl-alpha-D-muramoyl-L-alanyl-gamma-D-glutamyl-meso-2,6-diaminopimeloyl-D-alanyl-D-alanine + di-trans,octa-cis-undecaprenyl phosphate = di-trans,octa-cis-undecaprenyl diphospho-N-acetyl-alpha-D-muramoyl-L-alanyl-D-glutamyl-meso-2,6-diaminopimeloyl-D-alanyl-D-alanine + UMP. It functions in the pathway cell wall biogenesis; peptidoglycan biosynthesis. Catalyzes the initial step of the lipid cycle reactions in the biosynthesis of the cell wall peptidoglycan: transfers peptidoglycan precursor phospho-MurNAc-pentapeptide from UDP-MurNAc-pentapeptide onto the lipid carrier undecaprenyl phosphate, yielding undecaprenyl-pyrophosphoryl-MurNAc-pentapeptide, known as lipid I. This is Phospho-N-acetylmuramoyl-pentapeptide-transferase from Rhodopseudomonas palustris (strain BisB18).